A 569-amino-acid polypeptide reads, in one-letter code: Sugar transporter STL1 (569 aa).

Residues 1–29 (MKDLKLSNFKGKFISRTSHWGLTGKKLRY) are Cytoplasmic-facing. Residues 30 to 50 (FITIASMTGFSLFGYDQGLMA) form a helical membrane-spanning segment. The Extracellular segment spans residues 51–79 (SLITGKQFNYEFPATKENGDHDRHATVVQ). A helical transmembrane segment spans residues 80-100 (GATTSCYELGCFAGSLFVMFC). The Cytoplasmic segment spans residues 101-107 (GERIGRK). The chain crosses the membrane as a helical span at residues 108-128 (PLILMGSVITIIGAVISTCAF). Arg-129 is a topological domain (extracellular). A helical transmembrane segment spans residues 130-150 (GYWALGQFIIGRVVTGVGTGL). Over 151–168 (NTSTIPVWQSEMSKAENR) the chain is Cytoplasmic. Residues 169-189 (GLLVNLEGSTIAFGTMIAYWI) traverse the membrane as a helical segment. Over 190–203 (DFGLSYTNSSVQWR) the chain is Extracellular. Asn-197 carries an N-linked (GlcNAc...) asparagine glycan. The chain crosses the membrane as a helical span at residues 204 to 224 (FPVSMQIVFALFLLAFMIKLP). At 225 to 291 (ESPRWLISQS…SRGRSQNLQR (67 aa)) the chain is on the cytoplasmic side. Residues 292-312 (ALIAASTQFFQQFTGCNAAIY) form a helical membrane-spanning segment. Residues 313-330 (YSTVLFNKTIKLDYRLSM) lie on the Extracellular side of the membrane. The N-linked (GlcNAc...) asparagine glycan is linked to Asn-319. A helical transmembrane segment spans residues 331 to 351 (IIGGVFATIYALSTIGSFFLI). At 352–358 (EKLGRRK) the chain is on the cytoplasmic side. Residues 359–379 (LFLLGATGQAVSFTITFACLV) traverse the membrane as a helical segment. Topologically, residues 380–389 (KENKENARGA) are extracellular. The chain crosses the membrane as a helical span at residues 390-410 (AVGLFLFITFFGLSLLSLPWI). The Cytoplasmic portion of the chain corresponds to 411–426 (YPPEIASMKVRASTNA). A helical membrane pass occupies residues 427–447 (FSTCTNWLCNFAVVMFTPIFI). The Extracellular segment spans residues 448 to 453 (GQSGWG). Residues 454 to 474 (CYLFFAVMNYLYIPVIFFFYP) form a helical membrane-spanning segment. At 475-569 (ETAGRSLEEI…TVNDKANFEG (95 aa)) the chain is on the cytoplasmic side. Positions 524–533 (DDEMEKEDFG) are enriched in acidic residues. Residues 524-569 (DDEMEKEDFGEDRVEDTYNQINGDNSSSSSNIKNEDTVNDKANFEG) are disordered. The span at 556–569 (KNEDTVNDKANFEG) shows a compositional bias: basic and acidic residues.

Belongs to the major facilitator superfamily. Sugar transporter (TC 2.A.1.1) family.

Its subcellular location is the membrane. The sequence is that of Sugar transporter STL1 (STL1) from Saccharomyces cerevisiae (strain ATCC 204508 / S288c) (Baker's yeast).